Here is a 204-residue protein sequence, read N- to C-terminus: MRG/MORF4L-binding protein (204 aa).

The span at Met1–Lys15 shows a compositional bias: gly residues. The disordered stretch occupies residues Met1 to Glu27. Gly2 bears the N-acetylglycine mark. Ser23 carries the post-translational modification Phosphoserine. Lys127 participates in a covalent cross-link: Glycyl lysine isopeptide (Lys-Gly) (interchain with G-Cter in SUMO2). Basic and acidic residues-rich tracts occupy residues Glu128–Ala140 and Ala153–Asp175. The segment at Glu128 to Thr204 is disordered. The span at Ala189–Ala198 shows a compositional bias: low complexity. Phosphoserine occurs at positions 191 and 195.

It belongs to the EAF7 family. Component of the NuA4 histone acetyltransferase complex which contains the catalytic subunit KAT5/TIP60 and the subunits EP400, TRRAP/PAF400, BRD8/SMAP, EPC1, DMAP1/DNMAP1, RUVBL1/TIP49, RUVBL2, ING3, actin, ACTL6A/BAF53A, MORF4L1/MRG15, MORF4L2/MRGX, MRGBP, YEATS4/GAS41, VPS72/YL1 and MEAF6. MRGBP may interact directly with MORF4L1/MRG15 and MORF4L2/MRGX.

Its subcellular location is the nucleus. Component of the NuA4 histone acetyltransferase (HAT) complex which is involved in transcriptional activation of select genes principally by acetylation of nucleosomal histones H4 and H2A. This modification may both alter nucleosome - DNA interactions and promote interaction of the modified histones with other proteins which positively regulate transcription. This complex may be required for the activation of transcriptional programs associated with oncogene and proto-oncogene mediated growth induction, tumor suppressor mediated growth arrest and replicative senescence, apoptosis, and DNA repair. NuA4 may also play a direct role in DNA repair when recruited to sites of DNA damage. In Mus musculus (Mouse), this protein is MRG/MORF4L-binding protein (Mrgbp).